Here is a 772-residue protein sequence, read N- to C-terminus: Endoplasmic reticulum membrane sensor NFE2L1 (772 aa).

A helical; Signal-anchor for type II membrane protein membrane pass occupies residues 7 to 24; it reads YFTEGLIQFTILLSLIGV. Residues 191 to 199 are cholesterol recognition/amino acid consensus (CRAC) region; the sequence is IFDYSHRQK. Positions 198–216 are enriched in basic and acidic residues; the sequence is QKESEVDKELSDGRERGDG. The segment at 198-223 is disordered; sequence QKESEVDKELSDGRERGDGWRSAGGQ. N-linked (GlcNAc...) asparagine glycans are attached at residues asparagine 332, asparagine 340, asparagine 362, asparagine 402, asparagine 407, asparagine 414, asparagine 425, and asparagine 429. The segment at 472–531 is disordered; it reads EEEFDSDSGLSLDSGHSPASLSSSEASSSSSSSSSSSSSSSSSSSSFSEEGAVGYSSDSE. Low complexity predominate over residues 478 to 519; that stretch reads DSGLSLDSGHSPASLSSSEASSSSSSSSSSSSSSSSSSSSFS. Asparagine 574 carries N-linked (GlcNAc...) asparagine glycosylation. Residues 581-613 form a disordered region; it reads PGTLDPEEPKLPSVGKKSSKEKPSEFLDKQMSR. Positions 598 to 613 are enriched in basic and acidic residues; it reads SSKEKPSEFLDKQMSR. In terms of domain architecture, bZIP spans 654–717; that stretch reads LIRDIRRRGK…RQMKQKVQNL (64 aa). The tract at residues 656 to 675 is basic motif; that stretch reads RDIRRRGKNKMAAQNCRKRK. The segment at 682–696 is leucine-zipper; that stretch reads LERDVEDLQRDKSKL. Positions 761–768 match the Nuclear localization signal motif; the sequence is RRQERKQK.

This sequence belongs to the bZIP family. CNC subfamily. As to quaternary structure, interacts (via the bZIP domain) with small MAF protein (MAFF, MAFG or MAFK); required for binding to antioxidant response elements (AREs) on DNA. In terms of processing, cleaved at Leu-104 following retrotranslocation, releasing the protein from the endoplasmic reticulum membrane and forming the transcription factor NRF1 that translocates into the nucleus.

Its subcellular location is the endoplasmic reticulum membrane. It localises to the nucleus. In terms of biological role, endoplasmic reticulum membrane sensor that translocates into the nucleus in response to various stresses to act as a transcription factor. Constitutes a precursor of the transcription factor NRF1. Able to detect various cellular stresses, such as cholesterol excess, oxidative stress or proteasome inhibition. In response to stress, it is released from the endoplasmic reticulum membrane following cleavage and translocates into the nucleus to form the transcription factor NRF1. Acts as a key sensor of cholesterol excess: in excess cholesterol conditions, the endoplasmic reticulum membrane form of the protein directly binds cholesterol via its CRAC motif, preventing cleavage and release of the transcription factor NRF1, thereby allowing expression of genes promoting cholesterol removal. Involved in proteasome homeostasis: in response to proteasome inhibition, it is released from the endoplasmic reticulum membrane, translocates to the nucleus and activates expression of genes encoding proteasome subunits. Its function is as follows. CNC-type bZIP family transcription factor that translocates to the nucleus and regulates expression of target genes in response to various stresses. Heterodimerizes with small-Maf proteins (MAFF, MAFG or MAFK) and binds DNA motifs including the antioxidant response elements (AREs), which regulate expression of genes involved in oxidative stress response. Activates or represses expression of target genes, depending on the context. Plays a key role in cholesterol homeostasis by acting as a sensor of cholesterol excess: in low cholesterol conditions, translocates into the nucleus and represses expression of genes involved in defense against cholesterol excess. In excess cholesterol conditions, the endoplasmic reticulum membrane form of the protein directly binds cholesterol via its CRAC motif, preventing cleavage and release of the transcription factor NRF1, thereby allowing expression of genes promoting cholesterol removal. Critical for redox balance in response to oxidative stress: acts by binding the AREs motifs on promoters and mediating activation of oxidative stress response genes. Involved in proteasome homeostasis: in response to proteasome inhibition, mediates the 'bounce-back' of proteasome subunits by translocating into the nucleus and activating expression of genes encoding proteasome subunits. This is Endoplasmic reticulum membrane sensor NFE2L1 from Gallus gallus (Chicken).